A 612-amino-acid polypeptide reads, in one-letter code: Phosphomethylpyrimidine synthase (612 aa).

2 disordered regions span residues 1-33 and 105-146; these read MTIK…TEAG and AGRP…RDGN. The span at 12-24 shows a compositional bias: low complexity; the sequence is TQNTAQADTAENT. Basic and acidic residues predominate over residues 105-117; the sequence is AGRPVRPEDDGIK. Residues Asn213, Met242, Tyr271, His307, 327–329, 368–371, and Glu407 contribute to the substrate site; these read SRG and DGLR. His411 contributes to the Zn(2+) binding site. Tyr434 serves as a coordination point for substrate. His475 provides a ligand contact to Zn(2+). [4Fe-4S] cluster is bound by residues Cys555, Cys558, and Cys563.

Belongs to the ThiC family. [4Fe-4S] cluster is required as a cofactor.

The enzyme catalyses 5-amino-1-(5-phospho-beta-D-ribosyl)imidazole + S-adenosyl-L-methionine = 4-amino-2-methyl-5-(phosphooxymethyl)pyrimidine + CO + 5'-deoxyadenosine + formate + L-methionine + 3 H(+). The protein operates within cofactor biosynthesis; thiamine diphosphate biosynthesis. In terms of biological role, catalyzes the synthesis of the hydroxymethylpyrimidine phosphate (HMP-P) moiety of thiamine from aminoimidazole ribotide (AIR) in a radical S-adenosyl-L-methionine (SAM)-dependent reaction. This chain is Phosphomethylpyrimidine synthase, found in Streptomyces coelicolor (strain ATCC BAA-471 / A3(2) / M145).